The primary structure comprises 2370 residues: Genome polyprotein (2370 aa).

Gly-112 is lipidated: N-myristoyl glycine; by host. Disordered regions lie at residues 140–173 (VGDM…GNVV) and 704–736 (GADG…FDYP). Over residues 154-171 (GSNKGGSSTSPKSTSNGN) the composition is skewed to low complexity. Residues 713–725 (APTSDLSDGNPTT) show a composition bias toward polar residues. The region spanning 1358 to 1522 (YSTALSAISL…AAFSAAAALK (165 aa)) is the SF3 helicase domain. Residue 1384–1391 (GPPGTGKS) participates in ATP binding. Gly-1597 carries N-myristoyl glycine; by host lipidation. A helical membrane pass occupies residues 1646–1666 (IFAASSFLSLIAATLTIVRCL). A disordered region spans residues 1674–1696 (GAYSGTPVPKPRKKDLPKQPVYS). O-(5'-phospho-RNA)-tyrosine is present on Tyr-1676. The Peptidase C3 domain maps to 1697-1886 (GPVRRQGFDP…FSARLTPERV (190 aa)). Residues His-1745, Glu-1776, and Cys-1849 each act as for protease 3C activity in the active site. Polar residues predominate over residues 2007 to 2016 (SPGYPWTTQG). Residues 2007 to 2026 (SPGYPWTTQGRSRRSLFDED) form a disordered region. Residues 2122-2239 (SNVWSIDYSC…GSNQDFHPRE (118 aa)) enclose the RdRp catalytic domain. Residues Asp-2128 and Asp-2225 each act as for RdRp activity in the active site.

Interacts with capsid protein VP1. Interacts with capsid protein VP3. As to quaternary structure, interacts with capsid protein VP0. Interacts with capsid protein VP3. In terms of assembly, interacts with capsid protein VP0. Interacts with capsid protein VP1. Homodimer. Interacts with protein 2B. Interacts with protein 2C. As to quaternary structure, homodimer. Interacts with host ABCD3. Interacts with protein 2A. Interacts with host ACBD3. In terms of assembly, homodimer. Interacts with host ABCD3. Interacts with protein 2A. Interacts with protein 3A. Interacts with protein 3C. Interacts with host ACBD3. Homodimer. Interacts with host ABCD3 (via GOLD domain) and PI4KB; these interactions allow the formation of a viral protein/ACBD3/PI4KB complex in order to synthesize PI4P at the viral RNA replication sites. Interacts with protein 2C. Interacts with protein 3C. Protein 3C: Interacts with protein 2A. Protein 3C: Interacts with protein 2C. Specific enzymatic cleavages by the viral protease in vivo yield a variety of precursors and mature proteins. The leader protein-VP0 junction is cleaved by 3C proteinase. The VP1/2A junction is cleaved by the protein 3CD in association with protein 2A. In terms of processing, uridylylated by the polymerase and is covalently linked to the 5'-end of genomic RNA. This uridylylated form acts as a nucleotide-peptide primer for the polymerase.

It localises to the virion. It is found in the host cytoplasm. Its subcellular location is the host cytoplasmic vesicle membrane. The protein resides in the host Golgi apparatus membrane. The catalysed reaction is RNA(n) + a ribonucleoside 5'-triphosphate = RNA(n+1) + diphosphate. It catalyses the reaction Selective cleavage of Gln-|-Gly bond in the poliovirus polyprotein. In other picornavirus reactions Glu may be substituted for Gln, and Ser or Thr for Gly.. The enzyme catalyses ATP + H2O = ADP + phosphate + H(+). Its function is as follows. Required for viral RNA replication and viral RNA encapsidation. Does not have any proteolytic activity. In terms of biological role, forms an icosahedral capsid of pseudo T=3 symmetry with capsid proteins VP0 and VP3. Together they form an icosahedral capsid composed of 60 copies of each VP0, VP1, and VP3. All the three latter proteins contain a beta-sheet structure called beta-barrel jelly roll. Functionally, forms an icosahedral capsid of pseudo T=3 symmetry with capsid proteins VP1 and VP3. Together they form an icosahedral capsid composed of 60 copies of each VP0, VP1, and VP3. All the three latter proteins contain a beta-sheet structure called beta-barrel jelly roll. Forms an icosahedral capsid of pseudo T=3 symmetry with capsid proteins VP0 and VP1. Together they form an icosahedral capsid composed of 60 copies of each VP0, VP1, and VP3. All the three latter proteins contain a beta-sheet structure called beta-barrel jelly roll. Its function is as follows. Required for viral RNA replication. Does not have any proteolytic activity. In terms of biological role, affects membrane integrity and causes an increase in membrane permeability. Functionally, induces and associates with structural rearrangements of intracellular membranes. Displays RNA-binding, nucleotide binding and NTPase activities. May play a role in virion morphogenesis and viral RNA encapsidation by interacting with the capsid protein VP3. Serves as membrane anchor via its hydrophobic domain. Plays an essential role in viral RNA replication by recruiting PI4KB at the viral replication sites, thereby allowing the formation of rearranged membranous structures where viral replication takes place. Its function is as follows. Forms a primer, VPg-pU, which is utilized by the polymerase for the initiation of RNA chains. In terms of biological role, cysteine protease that generates mature viral proteins from the precursor polyprotein. In addition to its proteolytic activity, it binds to viral RNA, and thus influences viral genome replication. RNA and substrate cooperatively bind to the protease. Functionally, replicates the genomic and antigenomic RNAs by recognizing replications specific signals. Performs VPg uridylylation. The sequence is that of Genome polyprotein from Homo sapiens (Human).